A 93-amino-acid chain; its full sequence is Cobalt transport protein CbiN (93 aa).

Helical transmembrane passes span 5–25 (LMLL…NHGG) and 63–83 (LLFT…LGYC).

The protein belongs to the CbiN family. In terms of assembly, forms an energy-coupling factor (ECF) transporter complex composed of an ATP-binding protein (A component, CbiO), a transmembrane protein (T component, CbiQ) and 2 possible substrate-capture proteins (S components, CbiM and CbiN) of unknown stoichimetry.

It is found in the cell inner membrane. The protein operates within cofactor biosynthesis; adenosylcobalamin biosynthesis. Its function is as follows. Part of the energy-coupling factor (ECF) transporter complex CbiMNOQ involved in cobalt import. This chain is Cobalt transport protein CbiN, found in Salmonella gallinarum (strain 287/91 / NCTC 13346).